The chain runs to 52 residues: DNA-directed RNA polymerase subunit Rpo12 (52 aa).

Zn(2+)-binding residues include cysteine 13, cysteine 30, and cysteine 33.

The protein belongs to the archaeal Rpo12/eukaryotic RPC10 RNA polymerase subunit family. In terms of assembly, part of the RNA polymerase complex. Zn(2+) serves as cofactor.

It localises to the cytoplasm. The enzyme catalyses RNA(n) + a ribonucleoside 5'-triphosphate = RNA(n+1) + diphosphate. DNA-dependent RNA polymerase (RNAP) catalyzes the transcription of DNA into RNA using the four ribonucleoside triphosphates as substrates. The protein is DNA-directed RNA polymerase subunit Rpo12 of Pyrobaculum arsenaticum (strain DSM 13514 / JCM 11321 / PZ6).